We begin with the raw amino-acid sequence, 369 residues long: Core histone macro-H2A.1 (369 aa).

One can recognise a Histone H2A domain in the interval 2–117 (SSRGGKKKST…NIHPELLAKK (116 aa)). N6-lactoyllysine; alternate is present on residues Lys-7 and Lys-9. Lys-18 is subject to N6-methyllysine. N6-acetyllysine; alternate is present on Lys-116. Lys-116 is covalently cross-linked (Glycyl lysine isopeptide (Lys-Gly) (interchain with G-Cter in ubiquitin); alternate). Residue Lys-117 forms a Glycyl lysine isopeptide (Lys-Gly) (interchain with G-Cter in ubiquitin) linkage. Lys-123 is subject to N6-acetyllysine; alternate. Lys-123 is modified (N6,N6-dimethyllysine; alternate). Lys-123 is covalently cross-linked (Glycyl lysine isopeptide (Lys-Gly) (interchain with G-Cter in SUMO2); alternate). Positions 128–180 (ITPPPAKKAKSPSQKKPVSKKAGGKKGARKSKKKQGEVSKAASADSTTEGTPA) are disordered. At Thr-129 the chain carries Phosphothreonine. The segment covering 144-160 (PVSKKAGGKKGARKSKK) has biased composition (basic residues). Lys-167 is covalently cross-linked (Glycyl lysine isopeptide (Lys-Gly) (interchain with G-Cter in SUMO2)). 2 positions are modified to phosphoserine: Ser-170 and Ser-173. A Phosphothreonine modification is found at Thr-178. The Macro domain occupies 184–367 (TVLSTKSLFL…IYVQEMAKLD (184 aa)). A Glycyl lysine isopeptide (Lys-Gly) (interchain with G-Cter in SUMO2) cross-link involves residue Lys-189. Residues Asp-203, Ile-204, Val-226, Ser-275, Gly-312, Ser-313, Gly-314, and Asn-316 each contribute to the a glycoprotein site. Lys-320 participates in a covalent cross-link: Glycyl lysine isopeptide (Lys-Gly) (interchain with G-Cter in SUMO2).

It belongs to the histone H2A family. In terms of assembly, the nucleosome is a histone octamer containing two molecules each of H2A, H2B, H3 and H4 assembled in one H3-H4 heterotetramer and two H2A-H2B heterodimers. Interacts with HDAC1 and HDAC2. Interacts with SPOP. Part of a complex consisting of MACROH2A1, CUL3 and SPOP. As to quaternary structure, interacts with PARP1. In terms of processing, monoubiquitinated at either Lys-116 or Lys-117. May also be polyubiquitinated. Ubiquitination is mediated by the CUL3/SPOP E3 complex and does not promote proteasomal degradation. Instead, it is required for enrichment in inactive X chromosome chromatin. In terms of tissue distribution, widely expressed.

The protein localises to the nucleus. The protein resides in the chromosome. Its function is as follows. Variant histone H2A which replaces conventional H2A in a subset of nucleosomes where it represses transcription. Nucleosomes wrap and compact DNA into chromatin, limiting DNA accessibility to the cellular machineries which require DNA as a template. Histones thereby play a central role in transcription regulation, DNA repair, DNA replication and chromosomal stability. DNA accessibility is regulated via a complex set of post-translational modifications of histones, also called histone code, and nucleosome remodeling. Involved in stable X chromosome inactivation. Inhibits the binding of transcription factors, including NF-kappa-B, and interferes with the activity of remodeling SWI/SNF complexes. Inhibits histone acetylation by EP300 and recruits class I HDACs, which induces a hypoacetylated state of chromatin. Functionally, isoform that specifically binds poly-ADP-ribose and O-acetyl-ADP-ribose and plays a key role in NAD(+) metabolism. Able to bind to the ends of poly-ADP-ribose chains created by PARP1 and cap them. This prevents PARP1 from further addition of ADP-ribose and thus limits the consumption of nuclear NAD(+), allowing the cell to maintain proper NAD(+) levels in both the nucleus and the mitochondria to promote proper mitochondrial respiration. Increases the expression of genes involved in redox metabolism, including SOD3. In terms of biological role, in contrast to isoform 1, does not bind poly-ADP-ribose. Represses SOD3 gene expression. The protein is Core histone macro-H2A.1 of Homo sapiens (Human).